Here is a 449-residue protein sequence, read N- to C-terminus: Phosphoglucosamine mutase (449 aa).

S104 (phosphoserine intermediate) is an active-site residue. Positions 104, 243, 245, and 247 each coordinate Mg(2+). Position 104 is a phosphoserine (S104).

The protein belongs to the phosphohexose mutase family. Mg(2+) serves as cofactor. Post-translationally, activated by phosphorylation.

It catalyses the reaction alpha-D-glucosamine 1-phosphate = D-glucosamine 6-phosphate. Its function is as follows. Catalyzes the conversion of glucosamine-6-phosphate to glucosamine-1-phosphate. The chain is Phosphoglucosamine mutase from Xanthomonas euvesicatoria pv. vesicatoria (strain 85-10) (Xanthomonas campestris pv. vesicatoria).